Reading from the N-terminus, the 165-residue chain is Growth arrest and DNA damage-inducible protein GADD45 alpha (165 aa).

A Phosphothreonine modification is found at T2.

This sequence belongs to the GADD45 family. As to quaternary structure, interacts with AURKA, PCNA, GADD45GIP1 and MAPK14.

It is found in the nucleus. Might affect PCNA interaction with some CDK (cell division protein kinase) complexes; stimulates DNA excision repair in vitro and inhibits entry of cells into S phase. In T-cells, functions as a regulator of p38 MAPKs by inhibiting p88 phosphorylation and activity. This chain is Growth arrest and DNA damage-inducible protein GADD45 alpha (GADD45A), found in Cricetulus griseus (Chinese hamster).